A 411-amino-acid chain; its full sequence is Exodeoxyribonuclease 7 large subunit (411 aa).

This sequence belongs to the XseA family. In terms of assembly, heterooligomer composed of large and small subunits.

It localises to the cytoplasm. The enzyme catalyses Exonucleolytic cleavage in either 5'- to 3'- or 3'- to 5'-direction to yield nucleoside 5'-phosphates.. Its function is as follows. Bidirectionally degrades single-stranded DNA into large acid-insoluble oligonucleotides, which are then degraded further into small acid-soluble oligonucleotides. The sequence is that of Exodeoxyribonuclease 7 large subunit from Mycobacterium sp. (strain JLS).